The sequence spans 190 residues: Glutathione peroxidase 2 (190 aa).

U40 is an active-site residue. Position 40 (U40) is a non-standard amino acid, selenocysteine.

This sequence belongs to the glutathione peroxidase family. Homotetramer.

Its subcellular location is the cytoplasm. It localises to the cytosol. The enzyme catalyses 2 glutathione + H2O2 = glutathione disulfide + 2 H2O. It carries out the reaction a hydroperoxy polyunsaturated fatty acid + 2 glutathione = a hydroxy polyunsaturated fatty acid + glutathione disulfide + H2O. The catalysed reaction is tert-butyl hydroperoxide + 2 glutathione = tert-butanol + glutathione disulfide + H2O. It catalyses the reaction cumene hydroperoxide + 2 glutathione = 2-phenylpropan-2-ol + glutathione disulfide + H2O. The enzyme catalyses (13S)-hydroperoxy-(9Z,11E)-octadecadienoate + 2 glutathione = (13S)-hydroxy-(9Z,11E)-octadecadienoate + glutathione disulfide + H2O. It carries out the reaction (5S)-hydroperoxy-(6E,8Z,11Z,14Z)-eicosatetraenoate + 2 glutathione = (5S)-hydroxy-(6E,8Z,11Z,14Z)-eicosatetraenoate + glutathione disulfide + H2O. The catalysed reaction is (12R)-hydroperoxy-(5Z,8Z,10E,14Z)-eicosatetraenoate + 2 glutathione = (12R)-hydroxy-(5Z,8Z,10E,14Z)-eicosatetraenoate + glutathione disulfide + H2O. It catalyses the reaction (15S)-hydroperoxy-(5Z,8Z,11Z,13E)-eicosatetraenoate + 2 glutathione = (15S)-hydroxy-(5Z,8Z,11Z,13E)-eicosatetraenoate + glutathione disulfide + H2O. Functionally, catalyzes the reduction of hydroperoxides in a glutathione-dependent manner thus regulating cellular redox homeostasis. Can reduce small soluble hydroperoxides such as H2O2, cumene hydroperoxide and tert-butyl hydroperoxide, as well as several fatty acid-derived hydroperoxides. Cannot reduce phosphatidycholine hydroperoxide. In Sapajus apella (Brown-capped capuchin), this protein is Glutathione peroxidase 2 (GPX2).